A 321-amino-acid polypeptide reads, in one-letter code: Lipoyl synthase (321 aa).

Residues C68, C73, C79, C94, C98, C101, and S308 each coordinate [4Fe-4S] cluster. Residues 80–297 enclose the Radical SAM core domain; the sequence is FNHGTATFMI…KDVAMGLGFS (218 aa).

Belongs to the radical SAM superfamily. Lipoyl synthase family. The cofactor is [4Fe-4S] cluster.

The protein localises to the cytoplasm. It carries out the reaction [[Fe-S] cluster scaffold protein carrying a second [4Fe-4S](2+) cluster] + N(6)-octanoyl-L-lysyl-[protein] + 2 oxidized [2Fe-2S]-[ferredoxin] + 2 S-adenosyl-L-methionine + 4 H(+) = [[Fe-S] cluster scaffold protein] + N(6)-[(R)-dihydrolipoyl]-L-lysyl-[protein] + 4 Fe(3+) + 2 hydrogen sulfide + 2 5'-deoxyadenosine + 2 L-methionine + 2 reduced [2Fe-2S]-[ferredoxin]. It participates in protein modification; protein lipoylation via endogenous pathway; protein N(6)-(lipoyl)lysine from octanoyl-[acyl-carrier-protein]: step 2/2. Functionally, catalyzes the radical-mediated insertion of two sulfur atoms into the C-6 and C-8 positions of the octanoyl moiety bound to the lipoyl domains of lipoate-dependent enzymes, thereby converting the octanoylated domains into lipoylated derivatives. This is Lipoyl synthase from Aeromonas hydrophila subsp. hydrophila (strain ATCC 7966 / DSM 30187 / BCRC 13018 / CCUG 14551 / JCM 1027 / KCTC 2358 / NCIMB 9240 / NCTC 8049).